The chain runs to 118 residues: Protein BEX4 (118 aa).

The tract at residues 14–50 (VEKDKKNKKGGKASKQSEEESHHLEEVENKKPGGNVR) is disordered. Residues 28–44 (KQSEEESHHLEEVENKK) are compositionally biased toward basic and acidic residues. Positions 30–88 (SEEESHHLEEVENKKPGGNVRRKVRRLVPNFLWAIPNRHVDHSEGGEEVGRFVGQVMEA) are interaction with SIRT2. Residues 30–118 (SEEESHHLEE…DNHYDFCLIP (89 aa)) form an interaction with alpha-tubulin region. Residue C115 coordinates Zn(2+).

The protein belongs to the BEX family. Interacts with alpha-tubulin. Interacts with SIRT2. Ubiquitinated and degraded by the proteasome.

It is found in the cytoplasm. Its subcellular location is the cytoskeleton. The protein localises to the spindle pole. The protein resides in the nucleus. Functionally, may play a role in microtubule deacetylation by negatively regulating the SIRT2 deacetylase activity toward alpha-tubulin and thereby participate in the control of cell cycle progression and genomic stability. In absence of reductive stress, acts as a pseudosubstrate for the CRL2(FEM1B) complex: associates with FEM1B via zinc, thereby preventing association between FEM1B and its substrates. This Rattus norvegicus (Rat) protein is Protein BEX4.